The chain runs to 118 residues: Large ribosomal subunit protein bL20 (118 aa).

Belongs to the bacterial ribosomal protein bL20 family.

Functionally, binds directly to 23S ribosomal RNA and is necessary for the in vitro assembly process of the 50S ribosomal subunit. It is not involved in the protein synthesizing functions of that subunit. In Nostoc punctiforme (strain ATCC 29133 / PCC 73102), this protein is Large ribosomal subunit protein bL20.